Reading from the N-terminus, the 539-residue chain is Glutamyl-tRNA(Gln) amidotransferase subunit B, mitochondrial (539 aa).

Belongs to the GatB/GatE family. GatB subfamily. In terms of assembly, subunit of the heterotrimeric GatFAB amidotransferase (AdT) complex, composed of A, B and F subunits.

The protein localises to the mitochondrion. The catalysed reaction is L-glutamyl-tRNA(Gln) + L-glutamine + ATP + H2O = L-glutaminyl-tRNA(Gln) + L-glutamate + ADP + phosphate + H(+). Functionally, allows the formation of correctly charged Gln-tRNA(Gln) through the transamidation of misacylated Glu-tRNA(Gln) in the mitochondria. The reaction takes place in the presence of glutamine and ATP through an activated gamma-phospho-Glu-tRNA(Gln). The chain is Glutamyl-tRNA(Gln) amidotransferase subunit B, mitochondrial from Kluyveromyces lactis (strain ATCC 8585 / CBS 2359 / DSM 70799 / NBRC 1267 / NRRL Y-1140 / WM37) (Yeast).